Here is a 620-residue protein sequence, read N- to C-terminus: Membrane protein insertase YidC (620 aa).

The next 6 helical transmembrane spans lie at 5–25 (QIIG…FMST), 343–363 (LGWP…FDGL), 366–386 (VFSS…LVLL), 436–456 (LSGC…FNFF), 482–502 (LPFT…LMTI), and 529–549 (PVVF…YYFV).

The protein belongs to the OXA1/ALB3/YidC family. Type 1 subfamily. In terms of assembly, interacts with the Sec translocase complex via SecD. Specifically interacts with transmembrane segments of nascent integral membrane proteins during membrane integration.

The protein localises to the cell inner membrane. Its function is as follows. Required for the insertion and/or proper folding and/or complex formation of integral membrane proteins into the membrane. Involved in integration of membrane proteins that insert both dependently and independently of the Sec translocase complex, as well as at least some lipoproteins. Aids folding of multispanning membrane proteins. In Cytophaga hutchinsonii (strain ATCC 33406 / DSM 1761 / CIP 103989 / NBRC 15051 / NCIMB 9469 / D465), this protein is Membrane protein insertase YidC.